A 455-amino-acid chain; its full sequence is Maintenance of telomere capping protein 1 (455 aa).

Disordered regions lie at residues M1–P113 and A296–S317. Basic and acidic residues predominate over residues P27 to K38. The segment covering V80 to P113 has biased composition (polar residues). Over residues A296–Q305 the composition is skewed to basic and acidic residues.

It belongs to the MTC1 family.

It localises to the cytoplasm. Its function is as follows. Involved in telomere capping. The sequence is that of Maintenance of telomere capping protein 1 from Schizosaccharomyces pombe (strain 972 / ATCC 24843) (Fission yeast).